A 241-amino-acid chain; its full sequence is tRNA pseudouridine synthase B (241 aa).

Asp45 serves as the catalytic Nucleophile.

The protein belongs to the pseudouridine synthase TruB family. Type 1 subfamily.

It carries out the reaction uridine(55) in tRNA = pseudouridine(55) in tRNA. In terms of biological role, responsible for synthesis of pseudouridine from uracil-55 in the psi GC loop of transfer RNAs. In Chlamydia muridarum (strain MoPn / Nigg), this protein is tRNA pseudouridine synthase B.